A 456-amino-acid chain; its full sequence is Gamma-glutamyl phosphate reductase (456 aa).

Belongs to the gamma-glutamyl phosphate reductase family.

Its subcellular location is the cytoplasm. The catalysed reaction is L-glutamate 5-semialdehyde + phosphate + NADP(+) = L-glutamyl 5-phosphate + NADPH + H(+). It participates in amino-acid biosynthesis; L-proline biosynthesis; L-glutamate 5-semialdehyde from L-glutamate: step 2/2. Functionally, catalyzes the NADPH-dependent reduction of L-glutamate 5-phosphate into L-glutamate 5-semialdehyde and phosphate. The product spontaneously undergoes cyclization to form 1-pyrroline-5-carboxylate. The chain is Gamma-glutamyl phosphate reductase from Haloquadratum walsbyi (strain DSM 16790 / HBSQ001).